A 302-amino-acid chain; its full sequence is Giardin subunit alpha-5 (302 aa).

Annexin repeat units lie at residues 1–72 (MTST…VNMW), 74–144 (SRHE…VAGW), 153–226 (GSVE…AAHF), and 230–298 (GLPV…TLWR).

The protein belongs to the annexin family. Giardin subunit alpha subfamily.

It localises to the cytoplasm. The protein resides in the cytoskeleton. Functionally, giardins are involved in parasite attachment to the intestinal mucosa and in the cytoskeletal disassembly and reassembly that marks the transition from infectious trophozoite to transmissible cyst. They may interact with other cytoskeletal proteins such as microtubules in the microribbons or crossbridges, to maintain the integrity of the ventral disk. The chain is Giardin subunit alpha-5 from Giardia intestinalis (Giardia lamblia).